Consider the following 503-residue polypeptide: Probable cytosol aminopeptidase (503 aa).

The Mn(2+) site is built by Lys-270 and Asp-275. The active site involves Lys-282. Mn(2+) contacts are provided by Asp-293, Asp-352, and Glu-354. Arg-356 is an active-site residue.

The protein belongs to the peptidase M17 family. The cofactor is Mn(2+).

The protein resides in the cytoplasm. The catalysed reaction is Release of an N-terminal amino acid, Xaa-|-Yaa-, in which Xaa is preferably Leu, but may be other amino acids including Pro although not Arg or Lys, and Yaa may be Pro. Amino acid amides and methyl esters are also readily hydrolyzed, but rates on arylamides are exceedingly low.. It carries out the reaction Release of an N-terminal amino acid, preferentially leucine, but not glutamic or aspartic acids.. Functionally, presumably involved in the processing and regular turnover of intracellular proteins. Catalyzes the removal of unsubstituted N-terminal amino acids from various peptides. In Pectobacterium atrosepticum (strain SCRI 1043 / ATCC BAA-672) (Erwinia carotovora subsp. atroseptica), this protein is Probable cytosol aminopeptidase.